Consider the following 676-residue polypeptide: Periplasmic alpha-amylase (676 aa).

Positions 1–17 (MKLAACFLTLLPGFAVA) are cleaved as a signal peptide. 2 cysteine pairs are disulfide-bonded: Cys-57/Cys-75 and Cys-121/Cys-537. Asn-314 is a Ca(2+) binding site. Asp-460 acts as the Nucleophile in catalysis. A Ca(2+)-binding site is contributed by His-464. Glu-503 (proton donor) is an active-site residue.

This sequence belongs to the glycosyl hydrolase 13 family. Monomer. The cofactor is Ca(2+).

The protein localises to the periplasm. It carries out the reaction Endohydrolysis of (1-&gt;4)-alpha-D-glucosidic linkages in polysaccharides containing three or more (1-&gt;4)-alpha-linked D-glucose units.. In terms of biological role, since only maltooligosaccharides up to a chain length of 6 glucose units are actively transported through the cytoplasmic membrane via the membrane-bound complex of three proteins, MalF, MalG, and MalK, longer maltooligosaccharides must first be degraded by the periplasmic alpha-amylase, the MalS protein. This chain is Periplasmic alpha-amylase (malS), found in Escherichia coli (strain K12).